The following is a 271-amino-acid chain: Putative phosphoenolpyruvate synthase regulatory protein (271 aa).

151–158 contributes to the ADP binding site; it reads GVSRSGKT.

The protein belongs to the pyruvate, phosphate/water dikinase regulatory protein family. PSRP subfamily.

It catalyses the reaction [pyruvate, water dikinase] + ADP = [pyruvate, water dikinase]-phosphate + AMP + H(+). It carries out the reaction [pyruvate, water dikinase]-phosphate + phosphate + H(+) = [pyruvate, water dikinase] + diphosphate. Its function is as follows. Bifunctional serine/threonine kinase and phosphorylase involved in the regulation of the phosphoenolpyruvate synthase (PEPS) by catalyzing its phosphorylation/dephosphorylation. The polypeptide is Putative phosphoenolpyruvate synthase regulatory protein (Burkholderia cenocepacia (strain ATCC BAA-245 / DSM 16553 / LMG 16656 / NCTC 13227 / J2315 / CF5610) (Burkholderia cepacia (strain J2315))).